Here is a 307-residue protein sequence, read N- to C-terminus: Cyclin-dependent kinase 5 activator 1 (307 aa).

A lipid anchor (N-myristoyl glycine) is attached at glycine 2. Phosphoserine; by CDK5 is present on serine 8. The disordered stretch occupies residues 97–135 (TFAQPPPAQPPAPPASQLSGSQTGVSSSVKKAPHPAVSS). Over residues 100-110 (QPPPAQPPAPP) the composition is skewed to pro residues. Polar residues predominate over residues 112-125 (SQLSGSQTGVSSSV). Phosphothreonine; by CDK5 is present on threonine 138.

Belongs to the cyclin-dependent kinase 5 activator family. As to quaternary structure, heterodimer composed of a catalytic subunit CDK5 and a regulatory subunit CDK5R1 (p25) and macromolecular complex composed of at least CDK5, CDK5R1 (p35) and CDK5RAP1 or CDK5RAP2 or CDK5RAP3. Only the heterodimer shows kinase activity. Interacts with EPHA4 and NGEF; may mediate the activation of NGEF by EPHA4. Interacts with RASGRF2. The complex p35/CDK5 interacts with CLOCK. In terms of processing, the p35 form is proteolytically cleaved by calpain, giving rise to the p25 form. P35 has a 5 to 10 fold shorter half-life compared to p25. The conversion results in deregulation of the CDK5 kinase: p25/CDK5 kinase displays an increased and altered tau phosphorylation in comparison to the p35/CDK5 kinase in vivo. Myristoylated. A proper myristoylation signal is essential for the proper distribution of p35. Post-translationally, phosphorylation at Ser-8 and Thr-138 by CDK5 prevents calpain-mediated proteolysis. In terms of processing, ubiquitinated, leading to its degradation: degradation of p35 by proteasome results in down-regulation of CDK5 activity. During this process, CDK5 phosphorylates p35 and induces its ubiquitination and subsequent degradation. Ubiquitinated by the CRL2(FEM1B) complex, which recognizes the -Gly-Leu-Asp-Arg C-degron at the C-terminus, leading to its degradation. Brain and neuron specific.

It localises to the cell membrane. The protein localises to the cell projection. The protein resides in the neuron projection. It is found in the nucleus. Its subcellular location is the cytoplasm. It localises to the perinuclear region. The protein localises to the perikaryon. Functionally, p35 is a neuron specific activator of CDK5. The complex p35/CDK5 is required for neurite outgrowth and cortical lamination. Involved in dendritic spine morphogenesis by mediating the EFNA1-EPHA4 signaling. Activator of TPKII. The complex p35/CDK5 participates in the regulation of the circadian clock by modulating the function of CLOCK protein: phosphorylates CLOCK at 'Thr-451' and 'Thr-461' and regulates the transcriptional activity of the CLOCK-BMAL1 heterodimer in association with altered stability and subcellular distribution. The sequence is that of Cyclin-dependent kinase 5 activator 1 (CDK5R1) from Bos taurus (Bovine).